Reading from the N-terminus, the 695-residue chain is Serotransferrin (695 aa).

The first 19 residues, 1–19 (MRLAAGALLACAALGLCLA), serve as a signal peptide directing secretion. 2 consecutive Transferrin-like domains span residues 25 to 347 (VRWC…NLRE) and 361 to 680 (VKWC…NLRK). 2 disulfide bridges follow: C28-C67 and C38-C58. R42 is subject to Dimethylated arginine. Fe(3+)-binding residues include D82 and Y114. 17 disulfides stabilise this stretch: C137–C213, C156–C350, C177–C193, C180–C196, C190–C198, C246–C260, C358–C612, C364–C396, C374–C387, C421–C690, C436–C653, C468–C539, C492–C681, C502–C516, C513–C522, C579–C593, and C631–C636. Positions 139, 143, 145, and 146 each coordinate hydrogencarbonate. Y207 serves as a coordination point for Fe(3+). H268 is a Fe(3+) binding site. A Phosphoserine modification is found at S389. Fe(3+)-binding residues include D411 and Y444. Hydrogencarbonate contacts are provided by T470, R474, A476, and G477. N509 is a glycosylation site (N-linked (GlcNAc...) asparagine). Residue Y533 participates in Fe(3+) binding. H601 serves as a coordination point for Fe(3+). S682 bears the Phosphoserine mark.

This sequence belongs to the transferrin family. Monomer. Part of a complex composed of SLC40A1/ferroportin, TF/transferrin and HEPH/hephaestin that transfers iron from cells to transferrin. Expressed by the liver and secreted in plasma.

It localises to the secreted. In terms of biological role, transferrins are iron binding transport proteins which can bind two Fe(3+) ions in association with the binding of an anion, usually bicarbonate. It is responsible for the transport of iron from sites of absorption and heme degradation to those of storage and utilization. Serum transferrin may also have a further role in stimulating cell proliferation. This Oryctolagus cuniculus (Rabbit) protein is Serotransferrin (TF).